A 70-amino-acid polypeptide reads, in one-letter code: NADH dehydrogenase [ubiquinone] 1 alpha subcomplex subunit 1 (70 aa).

Residues 1–21 traverse the membrane as a helical segment; the sequence is MWFEILPGLSVMGVCLLIPGL.

It belongs to the complex I NDUFA1 subunit family. As to quaternary structure, complex I is composed of 45 different subunits. In terms of tissue distribution, primarily expressed in heart and skeletal muscle.

It is found in the mitochondrion inner membrane. In terms of biological role, accessory subunit of the mitochondrial membrane respiratory chain NADH dehydrogenase (Complex I), that is believed not to be involved in catalysis. Complex I functions in the transfer of electrons from NADH to the respiratory chain. The immediate electron acceptor for the enzyme is believed to be ubiquinone. The protein is NADH dehydrogenase [ubiquinone] 1 alpha subcomplex subunit 1 (NDUFA1) of Homo sapiens (Human).